Consider the following 158-residue polypeptide: Phosphopantetheine adenylyltransferase (158 aa).

Thr10 lines the substrate pocket. ATP contacts are provided by residues 10 to 11 and His18; that span reads TF. The substrate site is built by Lys42, Leu74, and Arg88. ATP is bound by residues 89–91, Glu99, and 124–130; these read GLR and NSFISST.

The protein belongs to the bacterial CoaD family. As to quaternary structure, homohexamer. Mg(2+) serves as cofactor.

The protein resides in the cytoplasm. The enzyme catalyses (R)-4'-phosphopantetheine + ATP + H(+) = 3'-dephospho-CoA + diphosphate. It functions in the pathway cofactor biosynthesis; coenzyme A biosynthesis; CoA from (R)-pantothenate: step 4/5. Reversibly transfers an adenylyl group from ATP to 4'-phosphopantetheine, yielding dephospho-CoA (dPCoA) and pyrophosphate. This is Phosphopantetheine adenylyltransferase from Shewanella loihica (strain ATCC BAA-1088 / PV-4).